The sequence spans 123 residues: uncharacterized protein (123 aa).

Disordered stretches follow at residues 1–21 and 82–123; these read MGAP…KLFK and EKTA…EDES.

This is an uncharacterized protein from Homo sapiens (Human).